We begin with the raw amino-acid sequence, 165 residues long: MSSVFSGDETAPFFGFLGAASALIFSCMGAAYGTAKSGVGVASMGVMRPELVMKSIVPVVMAGVLGIYGLIIAVIISTGINPKAKPYYLFDGYAHLSSGLACGLAGLAAGMAIGIVGDAGVRANAQQPKLFVGMILILIFAEALALYGLIVGIILSSRAGQSRAD.

At 1-10 (MSSVFSGDET) the chain is on the lumenal side. Residues 11–33 (APFFGFLGAASALIFSCMGAAYG) form a helical membrane-spanning segment. Residues 34-55 (TAKSGVGVASMGVMRPELVMKS) lie on the Cytoplasmic side of the membrane. Residues 56-76 (IVPVVMAGVLGIYGLIIAVII) form a helical membrane-spanning segment. The Lumenal segment spans residues 77–95 (STGINPKAKPYYLFDGYAH). Residues 96–117 (LSSGLACGLAGLAAGMAIGIVG) form a helical membrane-spanning segment. Topologically, residues 118-129 (DAGVRANAQQPK) are cytoplasmic. A helical membrane pass occupies residues 130-155 (LFVGMILILIFAEALALYGLIVGIIL). Residues 156–165 (SSRAGQSRAD) lie on the Lumenal side of the membrane.

The protein belongs to the V-ATPase proteolipid subunit family. In terms of assembly, V-ATPase is a heteromultimeric enzyme composed of a peripheral catalytic V1 complex (main components: subunits A, B, C, D, E, and F) attached to an integral membrane V0 proton pore complex (main component: the proteolipid protein; which is present as a hexamer that forms the proton-conducting pore).

The protein resides in the vacuole membrane. Proton-conducting pore forming subunit of the membrane integral V0 complex of vacuolar ATPase. V-ATPase is responsible for acidifying a variety of intracellular compartments in eukaryotic cells. This chain is V-type proton ATPase 16 kDa proteolipid subunit (VATP-P1), found in Oryza sativa subsp. indica (Rice).